We begin with the raw amino-acid sequence, 923 residues long: Protein prickle (923 aa).

The tract at residues 1 to 196 (MSYPYQKSHH…HPFHSPASAA (196 aa)) is disordered. Residues 11–34 (QTQQPQQNGHPQHQLMLQQQQQAD) show a composition bias toward low complexity. The span at 37 to 49 (PHHHHHHHVHHAT) shows a compositional bias: basic residues. 2 stretches are compositionally biased toward low complexity: residues 59–73 (RSPLRSPQSPPLYSG) and 106–118 (MPGMMPGQQPPGM). The span at 122–134 (LGGGGGGGGGGSA) shows a compositional bias: gly residues. Low complexity-rich tracts occupy residues 152-169 (STVTNTSSTATNAPSARS) and 184-196 (SSHHPFHSPASAA). Positions 275–383 (GGGHNYSQSD…TVKQITTTLI (109 aa)) constitute a PET domain. 3 consecutive LIM zinc-binding domains span residues 382-446 (LICE…ETLK), 447-507 (PRCS…MFAE), and 508-570 (YCDY…GEPP). Disordered stretches follow at residues 571–668 (TPSD…LDLT) and 703–867 (GPIA…SSAD). Residues 709-718 (NGNGPTGGGP) show a composition bias toward gly residues. The span at 738–748 (ESPSFSGTNSP) shows a compositional bias: polar residues. Residues 777 to 786 (HSIKEVRFEG) are compositionally biased toward basic and acidic residues. Residues 792–805 (LPRTKSYCQRNGGQ) show a composition bias toward polar residues. Residues 817–827 (SDDDELAEDET) show a composition bias toward acidic residues. Over residues 840–852 (QREQQRPVDDSDA) the composition is skewed to basic and acidic residues. Positions 853 to 865 (RSVCSTCSSSSSS) are enriched in low complexity.

It belongs to the prickle / espinas / testin family. As to quaternary structure, interacts with dsh; PET and LIM domains interact with dsh DEP domain, in wing cells. Interacts with Vang in photoreceptor cells.

Its subcellular location is the cell membrane. Functionally, acts in a planar cell polarity (PCP) complex; polarization along the apical/basal axis of epithelial cells. PCP signaling in the wing disk requires the receptor fz and the cytoplasmic proteins dsh and pk. These act in a feedback loop leading to activation of the jnk cascade and subsequent polarized arrangement of hairs and bristles. Dgo and pk compete with one another for dsh binding, thereby modulating fz dsh activity and ensuring tight control over fz PCP signaling. Vang, stan and pk function together to regulate the establishment of tissue polarity in the adult eye. The chain is Protein prickle from Anopheles gambiae (African malaria mosquito).